The chain runs to 371 residues: 2-aminoethylphosphonate--pyruvate transaminase (371 aa).

Lys198 carries the N6-(pyridoxal phosphate)lysine modification.

The protein belongs to the class-V pyridoxal-phosphate-dependent aminotransferase family. PhnW subfamily. In terms of assembly, homodimer. It depends on pyridoxal 5'-phosphate as a cofactor.

The enzyme catalyses (2-aminoethyl)phosphonate + pyruvate = phosphonoacetaldehyde + L-alanine. Its function is as follows. Involved in phosphonate degradation. This is 2-aminoethylphosphonate--pyruvate transaminase from Syntrophobacter fumaroxidans (strain DSM 10017 / MPOB).